The chain runs to 68 residues: U4-agatoxin-Ao1a (68 aa).

The first 25 residues, Met1–Ala25, serve as a signal peptide directing secretion. The propeptide occupies Glu26 to Arg36. Disulfide bonds link Cys39/Cys52, Cys46/Cys57, Cys51/Cys66, and Cys59/Cys64.

The protein belongs to the neurotoxin 33 family. Expressed by the venom gland.

Its subcellular location is the secreted. The chain is U4-agatoxin-Ao1a from Agelena orientalis (Funnel-web spider).